A 130-amino-acid polypeptide reads, in one-letter code: Small ribosomal subunit protein uS11 (130 aa).

Belongs to the universal ribosomal protein uS11 family. In terms of assembly, part of the 30S ribosomal subunit. Interacts with proteins S7 and S18. Binds to IF-3.

In terms of biological role, located on the platform of the 30S subunit, it bridges several disparate RNA helices of the 16S rRNA. Forms part of the Shine-Dalgarno cleft in the 70S ribosome. This Syntrophomonas wolfei subsp. wolfei (strain DSM 2245B / Goettingen) protein is Small ribosomal subunit protein uS11.